Consider the following 460-residue polypeptide: Dihydroorotate dehydrogenase (quinone), mitochondrial (460 aa).

A mitochondrion-targeting transit peptide spans 1 to 32 (MAGRAATSSAKWAREFLFRRVSSNPLGATRNC). The helical transmembrane segment at 53–69 (ILTGATIGLAIAGGAYV) threads the bilayer. Residues 141-145 (AGFDK) and Ser165 each bind FMN. A substrate-binding site is contributed by Lys145. 190 to 194 (NRCGF) lines the substrate pocket. Residues 213-245 (RMLAETSATSSSPSDDVKPGGKSGPGILGVNLG) form a disordered region. FMN-binding residues include Asn243 and Asn274. Substrate is bound at residue 274–279 (NVSSPN). Residue Ser277 is the Nucleophile of the active site. Residues Lys319 and Ser347 each contribute to the FMN site. Position 348–349 (348–349 (NT)) interacts with substrate. Residues Gly371, Gly400, and 421–422 (YT) contribute to the FMN site.

The protein belongs to the dihydroorotate dehydrogenase family. Type 2 subfamily. FMN serves as cofactor.

The protein localises to the mitochondrion inner membrane. The catalysed reaction is (S)-dihydroorotate + a quinone = orotate + a quinol. It participates in pyrimidine metabolism; UMP biosynthesis via de novo pathway; orotate from (S)-dihydroorotate (quinone route): step 1/1. Functionally, catalyzes the conversion of dihydroorotate to orotate with quinone as electron acceptor. This chain is Dihydroorotate dehydrogenase (quinone), mitochondrial (PYRD), found in Arabidopsis thaliana (Mouse-ear cress).